A 1667-amino-acid chain; its full sequence is Androglobin (1667 aa).

Over residues 1-11 (MASKQTKKKEV) the composition is skewed to basic residues. Disordered regions lie at residues 1–45 (MASK…KGKF), 347–387 (SLTT…KFSL), and 540–566 (GSDLPSVSETDETATHSQTDLSQITKA). Residues 70–411 (KDKTGKSPVF…SLSDCSSAIQ (342 aa)) enclose the Calpain catalytic domain. Positions 353–384 (APEKSDKVPKEKADARDIGKKRSKDGEKEKFK) are enriched in basic and acidic residues. A compositionally biased stretch (polar residues) spans 554–566 (THSQTDLSQITKA). The region spanning 763-890 (HICSMVSFVI…EEVSLVEWLD (128 aa)) is the Globin; C-terminal part domain. 2 residues coordinate heme b: Gln792 and His824. An IQ domain is found at 906-935 (EVAAAIKIQAMWRGTYVRLLMKARIPDTKE). The Globin; N-terminal part domain occupies 936–968 (NISVADTLQKVWAVLEMNLEQYAVSLLRLMFKS). 2 disordered regions span residues 1297-1355 (INLG…QQED) and 1420-1522 (TSDA…RSPT). The segment covering 1301-1315 (SPDSHTISEGQKSSV) has biased composition (polar residues). Basic and acidic residues-rich tracts occupy residues 1325 to 1340 (EKSSEKEKTAKEKQAP) and 1433 to 1450 (TKPKEEVETAARGVKEPN). The segment covering 1451-1468 (SKNSAGSESKEMTQTGSG) has biased composition (polar residues). Residues 1487–1498 (STSSESGGVSSP) show a composition bias toward low complexity. Residues 1499-1511 (GKEEREQSTRKEN) show a composition bias toward basic and acidic residues. Residues 1512–1522 (IQTGPRTRSPT) are compositionally biased toward polar residues. Residues 1588–1629 (QEERLKLKDEVLDMYKEMQDSLDEARQKIFDIREEYRNKLLE) are a coiled coil. Positions 1646–1667 (KLETEKMTPAPDTQKKKKGKKK) are disordered.

The protein in the central section; belongs to the globin family. In the N-terminal section; belongs to the peptidase C2 family. As to quaternary structure, interacts with septin SEPT10; contributes to in vitro proteolytic cleavage of SEPT10 in a calmodulin-dependent manner. Interacts with CFAP69. Interacts with SPEF2. May interact with calmodulin.

The protein localises to the cell projection. The protein resides in the cilium. Its subcellular location is the flagellum. Probable chimeric globin with a bis-histidyl six-coordinate heme-iron atom through which it could bind dioxygen, carbon monoxide and nitric oxide. Required for sperm flagellum formation and maturation of elongating spermatids, thus playing an essential role in male fertility. This Homo sapiens (Human) protein is Androglobin.